Reading from the N-terminus, the 162-residue chain is MASVRTCVVRSDQWRLMTFETTENDKVKKINEHIRSQTKVSVQDQILLLDSKILKPHRKLSSYGIDKETTIHLTLKVVKPSDEELPLFLVESKNEGQRHLLRVRRSSSVAQVKEMIESVTSVIPKKQVVNCNGKKLEDGKIMADYNIKSGSLLFLTTHCTGG.

Ubiquitin-like domains lie at 3–78 and 87–160; these read SVRT…LKVV and LFLV…THCT.

It belongs to the ubiquitin D family. As to quaternary structure, interacts directly with the 26S proteasome. Interacts with NUB1; this interaction facilitates the linking of UBD-conjugated target protein to the proteasome complex and accelerates its own degradation and that of its conjugates. Interacts (via ubiquitin-like 1 domain) with the spindle checkpoint protein MAD2L1 during mitosis. Present in aggresomes of proteasome inhibited cells. Interacts with HDAC6 under proteasome impairment conditions. Forms a thioester with UBA6 in cells stimulated with tumor necrosis factor-alpha (TNFa) and interferon-gamma (IFNg). Interacts with SQSTM1 and TP53/p53. Post-translationally, can be acetylated. As to expression, mostly expressed in thymus and intestine.

It localises to the nucleus. Its subcellular location is the cytoplasm. Ubiquitin-like protein modifier which can be covalently attached to target proteins and subsequently leads to their degradation by the 26S proteasome, in a NUB1-dependent manner. Conjugation to the target protein is activated by UBA6 via adenylation of its C-terminal glycine. Probably functions as a survival factor. Promotes the expression of the proteasome subunit beta type-9 (PSMB9/LMP2). Regulates TNF-alpha-induced and LPS-mediated activation of the central mediator of innate immunity NF-kappa-B by promoting TNF-alpha-mediated proteasomal degradation of ubiquitinated-I-kappa-B-alpha. Required for TNF-alpha-induced p65 nuclear translocation in renal tubular epithelial cells (RTECs). May be involved in dendritic cell (DC) maturation, the process by which immature dendritic cells differentiate into fully competent antigen-presenting cells that initiate T-cell responses. Mediates mitotic non-disjunction and chromosome instability, in long-term in vitro culture and cancers, by abbreviating mitotic phase and impairing the kinetochore localization of MAD2L1 during the prometaphase stage of the cell cycle. May be involved in the formation of aggresomes when proteasome is saturated or impaired. Mediates apoptosis in a caspase-dependent manner, especially in renal epithelium and tubular cells during renal diseases. This Mus musculus (Mouse) protein is Ubiquitin D (Ubd).